The primary structure comprises 116 residues: NADPH-dependent 7-cyano-7-deazaguanine reductase (116 aa).

The Thioimide intermediate role is filled by C31. D38 acts as the Proton donor in catalysis. Substrate is bound by residues 53 to 55 (VEL) and 72 to 73 (YE).

Belongs to the GTP cyclohydrolase I family. QueF type 1 subfamily.

The protein localises to the cytoplasm. It catalyses the reaction 7-aminomethyl-7-carbaguanine + 2 NADP(+) = 7-cyano-7-deazaguanine + 2 NADPH + 3 H(+). It functions in the pathway tRNA modification; tRNA-queuosine biosynthesis. Functionally, catalyzes the NADPH-dependent reduction of 7-cyano-7-deazaguanine (preQ0) to 7-aminomethyl-7-deazaguanine (preQ1). The protein is NADPH-dependent 7-cyano-7-deazaguanine reductase of Chloroherpeton thalassium (strain ATCC 35110 / GB-78).